Reading from the N-terminus, the 64-residue chain is DNA-directed RNA polymerase subunit Rpo10 (64 aa).

4 residues coordinate Zn(2+): Cys-7, Cys-10, Cys-45, and Cys-46.

This sequence belongs to the archaeal Rpo10/eukaryotic RPB10 RNA polymerase subunit family. Part of the RNA polymerase complex. Zn(2+) serves as cofactor.

The protein localises to the cytoplasm. It catalyses the reaction RNA(n) + a ribonucleoside 5'-triphosphate = RNA(n+1) + diphosphate. Functionally, DNA-dependent RNA polymerase (RNAP) catalyzes the transcription of DNA into RNA using the four ribonucleoside triphosphates as substrates. The sequence is that of DNA-directed RNA polymerase subunit Rpo10 from Halorubrum lacusprofundi (strain ATCC 49239 / DSM 5036 / JCM 8891 / ACAM 34).